Reading from the N-terminus, the 376-residue chain is Probable allantoicase (376 aa).

This sequence belongs to the allantoicase family.

It carries out the reaction allantoate + H2O = (S)-ureidoglycolate + urea. It functions in the pathway nitrogen metabolism; (S)-allantoin degradation; (S)-ureidoglycolate from allantoate (aminidohydrolase route): step 1/1. In Streptomyces avermitilis (strain ATCC 31267 / DSM 46492 / JCM 5070 / NBRC 14893 / NCIMB 12804 / NRRL 8165 / MA-4680), this protein is Probable allantoicase.